A 391-amino-acid polypeptide reads, in one-letter code: DNA polymerase IV (391 aa).

Residues 6-187 enclose the UmuC domain; it reads IIHVDMDAFF…LPVEMLWGVG (182 aa). The Mg(2+) site is built by Asp-10 and Asp-105. The active site involves Glu-106.

The protein belongs to the DNA polymerase type-Y family. As to quaternary structure, monomer. Mg(2+) serves as cofactor.

It is found in the cytoplasm. The enzyme catalyses DNA(n) + a 2'-deoxyribonucleoside 5'-triphosphate = DNA(n+1) + diphosphate. Poorly processive, error-prone DNA polymerase involved in untargeted mutagenesis. Copies undamaged DNA at stalled replication forks, which arise in vivo from mismatched or misaligned primer ends. These misaligned primers can be extended by PolIV. Exhibits no 3'-5' exonuclease (proofreading) activity. May be involved in translesional synthesis, in conjunction with the beta clamp from PolIII. The sequence is that of DNA polymerase IV from Carboxydothermus hydrogenoformans (strain ATCC BAA-161 / DSM 6008 / Z-2901).